Here is a 141-residue protein sequence, read N- to C-terminus: Holo-[acyl-carrier-protein] synthase (141 aa).

Mg(2+)-binding residues include D8 and E61.

It belongs to the P-Pant transferase superfamily. AcpS family. The cofactor is Mg(2+).

It localises to the cytoplasm. It catalyses the reaction apo-[ACP] + CoA = holo-[ACP] + adenosine 3',5'-bisphosphate + H(+). In terms of biological role, transfers the 4'-phosphopantetheine moiety from coenzyme A to a Ser of acyl-carrier-protein. This Rhodopseudomonas palustris (strain HaA2) protein is Holo-[acyl-carrier-protein] synthase.